A 294-amino-acid chain; its full sequence is Glycine--tRNA ligase alpha subunit (294 aa).

This sequence belongs to the class-II aminoacyl-tRNA synthetase family. In terms of assembly, tetramer of two alpha and two beta subunits.

It is found in the cytoplasm. The catalysed reaction is tRNA(Gly) + glycine + ATP = glycyl-tRNA(Gly) + AMP + diphosphate. This chain is Glycine--tRNA ligase alpha subunit, found in Natranaerobius thermophilus (strain ATCC BAA-1301 / DSM 18059 / JW/NM-WN-LF).